We begin with the raw amino-acid sequence, 262 residues long: Ribosomal RNA small subunit methyltransferase A (262 aa).

Positions 18, 43, 65, 91, and 110 each coordinate S-adenosyl-L-methionine.

This sequence belongs to the class I-like SAM-binding methyltransferase superfamily. rRNA adenine N(6)-methyltransferase family. RsmA subfamily.

It is found in the cytoplasm. It carries out the reaction adenosine(1518)/adenosine(1519) in 16S rRNA + 4 S-adenosyl-L-methionine = N(6)-dimethyladenosine(1518)/N(6)-dimethyladenosine(1519) in 16S rRNA + 4 S-adenosyl-L-homocysteine + 4 H(+). Its function is as follows. Specifically dimethylates two adjacent adenosines (A1518 and A1519) in the loop of a conserved hairpin near the 3'-end of 16S rRNA in the 30S particle. May play a critical role in biogenesis of 30S subunits. The sequence is that of Ribosomal RNA small subunit methyltransferase A from Ehrlichia canis (strain Jake).